Reading from the N-terminus, the 352-residue chain is Quinolinate synthase (352 aa).

Iminosuccinate is bound by residues His48 and Ser69. Cys114 is a [4Fe-4S] cluster binding site. Iminosuccinate contacts are provided by residues 140–142 (YAN) and Ser157. [4Fe-4S] cluster is bound at residue Cys201. Residues 227 to 229 (HPE) and Thr244 each bind iminosuccinate. Cys298 contributes to the [4Fe-4S] cluster binding site.

This sequence belongs to the quinolinate synthase family. Type 1 subfamily. It depends on [4Fe-4S] cluster as a cofactor.

It localises to the cytoplasm. It carries out the reaction iminosuccinate + dihydroxyacetone phosphate = quinolinate + phosphate + 2 H2O + H(+). It participates in cofactor biosynthesis; NAD(+) biosynthesis; quinolinate from iminoaspartate: step 1/1. Functionally, catalyzes the condensation of iminoaspartate with dihydroxyacetone phosphate to form quinolinate. The polypeptide is Quinolinate synthase (Pseudomonas fluorescens (strain Pf0-1)).